The primary structure comprises 411 residues: C6 finger domain transcription factor hasA (411 aa).

Positions 1-17 (MTSTLPYLTSPPATHPS) are enriched in polar residues. The interval 1 to 21 (MTSTLPYLTSPPATHPSNSDH) is disordered. Positions 28–54 (CDSCHQCKVKCSGGSPCFRCTSKGLNC) form a DNA-binding region, zn(2)-C6 fungal-type.

It is found in the nucleus. Functionally, transcription factor; part of the gene cluster that mediates the biosynthesis of hexadehydro-astechrome (HAS), a tryptophan-derived iron(III)-complex that acts as a virulence factor in infected mice. Positively regulates the expression of the HAS biosynthetic genes. The sequence is that of C6 finger domain transcription factor hasA from Aspergillus fumigatus (strain CBS 144.89 / FGSC A1163 / CEA10) (Neosartorya fumigata).